We begin with the raw amino-acid sequence, 287 residues long: uncharacterized protein (287 aa).

Disordered regions lie at residues Q109–D175, I203–V223, and K257–E287. A compositionally biased stretch (low complexity) spans E110–P136. Residues R143–K152 are compositionally biased toward basic and acidic residues. Residues E153–N162 show a composition bias toward basic residues. Residues S273–E287 show a composition bias toward basic and acidic residues.

This sequence belongs to the chlamydial CPn_0623/CT_504/TC_0791 family.

This is an uncharacterized protein from Chlamydia muridarum (strain MoPn / Nigg).